Here is a 233-residue protein sequence, read N- to C-terminus: Favin (233 aa).

The Mn(2+) site is built by glutamate 120 and aspartate 122. Residues aspartate 122, phenylalanine 124, asparagine 126, and aspartate 130 each coordinate Ca(2+). Mn(2+) is bound by residues aspartate 130 and histidine 137. A glycan (N-linked (GlcNAc...) asparagine) is linked at asparagine 168.

It belongs to the leguminous lectin family. As to quaternary structure, heterodimer of an alpha and a beta chain.

The chain is Favin from Vicia faba (Broad bean).